Here is a 372-residue protein sequence, read N- to C-terminus: Envelope phospholipase OPG057 (372 aa).

The short motif at 153–156 (YPPL) is the YPPL element. 2 S-palmitoyl cysteine; by host lipidation sites follow: Cys185 and Cys186. The 28-residue stretch at 307 to 334 (FTIQNNTKLLIVDDEYVHITSANFDGTH) folds into the PLD phosphodiesterase domain.

This sequence belongs to the orthopoxvirus OPG057 family. Interacts with protein OPG190. Palmitoylated. Attachment of the palmitate moiety is essential for correct intracellular targeting and protein function.

It localises to the virion membrane. The protein localises to the host Golgi apparatus. It is found in the host trans-Golgi network. Its subcellular location is the host endoplasmic reticulum membrane. It carries out the reaction a 1,2-diacyl-sn-glycero-3-phosphocholine + H2O = a 1,2-diacyl-sn-glycero-3-phosphate + choline + H(+). Its function is as follows. Major envelope protein that plays a role in the biogenesis of the viral double membrane and in egress of virus from the host cell. Produces the wrapped form of virus that is required for cell-to-cell spread. Acts as a lipase with broad specificity including phospholipase C, phospholipase A, and triacylglycerol lipase activities. The chain is Envelope phospholipase OPG057 (OPG057) from Homo sapiens (Human).